The chain runs to 1059 residues: MALQLGKKLAQVLGSGAGSPLTPGTMEPCAAGSGSPLANGELFNVSKAKKVELQNLSSRFTAAVTQTPPGVTSSTPNESGVTGPAGPLGATTSSPSLETQSTVIISFKSSQTPVQSQTNSAASENVEDDTAPLPLPPPPPGFGTPTTPLLSSNVLKKVASFTVEKSSAGNNSSNPPNLCPTSDETTLLATPCSSSLTVATLPPEIAVGAAAGGVAGGAGSRRGSSYVPEKLSFAAYEKFEGQMLIKWLISTMQSNPKSSSGDANQELFNTLALQFCNNLKYVGVLKQISNEHLDCGFSPYEMYQWTHTEQPTTSLPLTPGKLDKVAAWPFSSTPSGIRALESASLASLGAGGVAGSLATIATASTASSDNQKTLQQILKKRLLNCTTLAEVHAVVNELLSSVDEPPRRPSKRCVNLTELLNASEATVYEYNKTGAEGCVKSFTDAETQTESEDCEGTCKCGQSSTKVSDNESAKEDGEKPHAVAPPPPPPPPPLHAFVAPPPPPPPPPPPPPPLANYGAPPPPPPPPPGSGSAPPPPPPAPIEGGGGIPPPPPPMSASPSKTTISPAPLPDPAEGNWFHRTNTMRKSAVNPPKPMRPLYWTRIVTSAPPAPRPPSVANSTDSTENSGSSPDEPPAANGADAPPTAPPATKEIWTEIEETPLDNIDEFTELFSRQAIAPVSKPKELKVKRAKSIKVLDPERSRNVGIIWRSLHVPSSEIEHAIYHIDTSVVSLEALQHMSNIQATEDELQRIKEAAGGDIPLDHPEQFLLDISLISMASERISCIVFQAEFEESVTLLFRKLETVSQLSQQLIESEDLKLVFSIILTLGNYMNGGNRQRGQADGFNLDILGKLKDVKSKESHTTLLHFIVRTYIAQRRKEGVHPLEIRLPIPEPADVERAAQMDFEEVQQQIFDLNKKFLGCKRTTAKVLAASRPEIMEPFKSKMEEFVEGADKSMAKLHQSLDECRDLFLETMRFYHFSPKACTLTLAQCTPDQFFEYWTNFTNDFKDIWKKEITSLLNELMKKSKQAQIESRRNVSTKVEKSGRISLKERMLMRRSKN.

2 stretches are compositionally biased toward polar residues: residues A62 to G80 and A90 to S123. Disordered stretches follow at residues A62–T146 and Q448–P647. Residues L133–F142 are compositionally biased toward pro residues. The segment covering S468–H481 has biased composition (basic and acidic residues). The FH1 domain occupies P480–S560. The span at V483 to P541 shows a compositional bias: pro residues. Residues R585 to S1032 enclose the FH2 domain. Polar residues predominate over residues T620–S629. The interval K1049 to N1059 is important for interaction with spir.

This sequence belongs to the formin homology family. Cappuccino subfamily. As to quaternary structure, interacts with wash. Interacts with spir.

Its subcellular location is the cytoplasm. The protein resides in the cytoskeleton. The protein localises to the cytosol. It localises to the membrane. It is found in the cytoplasmic vesicle membrane. In terms of biological role, acts as an actin nucleation factor and promotes assembly of actin filaments together with spir. May play a role in intracellular vesicle transport along actin fibers, providing a novel link between actin cytoskeleton dynamics and intracellular transport. The protein is Protein cappuccino (capu) of Drosophila melanogaster (Fruit fly).